Reading from the N-terminus, the 494-residue chain is Alpha-amylase (494 aa).

Positions 1–26 (MQISKAALLASLAALVYAQPVTLFKR) are cleaved as a signal peptide. Cysteine 57 and cysteine 65 are oxidised to a cystine. Tryptophan 110 lines the substrate pocket. Position 148 (asparagine 148) interacts with Ca(2+). Residue histidine 149 participates in substrate binding. The cysteines at positions 177 and 191 are disulfide-linked. Position 202 (aspartate 202) interacts with Ca(2+). The N-linked (GlcNAc...) asparagine glycan is linked to asparagine 224. Arginine 231 provides a ligand contact to substrate. Ca(2+)-binding residues include aspartate 233, histidine 237, and glutamate 257. Aspartate 233 (nucleophile) is an active-site residue. 236–237 (KH) contributes to the substrate binding site. Glutamate 257 (proton donor) is an active-site residue. Glycine 261 is a substrate binding site. Cysteines 267 and 310 form a disulfide. Residues aspartate 324 and arginine 371 each contribute to the substrate site. Cysteine 462 and cysteine 493 are joined by a disulfide.

It belongs to the glycosyl hydrolase 13 family. Ca(2+) is required as a cofactor.

Its subcellular location is the secreted. The enzyme catalyses Endohydrolysis of (1-&gt;4)-alpha-D-glucosidic linkages in polysaccharides containing three or more (1-&gt;4)-alpha-linked D-glucose units.. The chain is Alpha-amylase (ALP1) from Saccharomycopsis fibuligera (Yeast).